Consider the following 400-residue polypeptide: Arrestin, lateral eye (400 aa).

This sequence belongs to the arrestin family. In terms of processing, phosphorylated.

In terms of biological role, plays an important role in the photoreceptor transduction. This chain is Arrestin, lateral eye, found in Limulus polyphemus (Atlantic horseshoe crab).